The following is a 317-amino-acid chain: ATP synthase gamma chain (317 aa).

It belongs to the ATPase gamma chain family. As to quaternary structure, F-type ATPases have 2 components, CF(1) - the catalytic core - and CF(0) - the membrane proton channel. CF(1) has five subunits: alpha(3), beta(3), gamma(1), delta(1), epsilon(1). CF(0) has three main subunits: a, b and c.

The protein localises to the cellular thylakoid membrane. Its function is as follows. Produces ATP from ADP in the presence of a proton gradient across the membrane. The gamma chain is believed to be important in regulating ATPase activity and the flow of protons through the CF(0) complex. The chain is ATP synthase gamma chain from Synechococcus sp. (strain CC9902).